We begin with the raw amino-acid sequence, 93 residues long: Co-chaperonin GroES (93 aa).

The protein belongs to the GroES chaperonin family. As to quaternary structure, heptamer of 7 subunits arranged in a ring. Interacts with the chaperonin GroEL.

The protein resides in the cytoplasm. In terms of biological role, together with the chaperonin GroEL, plays an essential role in assisting protein folding. The GroEL-GroES system forms a nano-cage that allows encapsulation of the non-native substrate proteins and provides a physical environment optimized to promote and accelerate protein folding. GroES binds to the apical surface of the GroEL ring, thereby capping the opening of the GroEL channel. The protein is Co-chaperonin GroES of Streptococcus gordonii.